A 276-amino-acid polypeptide reads, in one-letter code: MAIKKYKPTTNGCRNMSVSAFSEITTQTPERSLLVSHKDQAGRNNQGKITVRHRGGGVKRKYRLIDFKRNKDNIVGKVATIEYDPNRSANIALIHYVDGEKRYILAPKGLTVGMQIVSGKETDIKVANCLPLMNIPVGTTVHNIELKPGKGGQIARSAGSSCQIISREDKYVLLRLQSGEVRKVLATCRATIGEIGNESYKLINYGKAGKKRFLGIRPTVRGSAMNPNDHPHGGGEGRAPIGRKSPMTPWGKKARGVKTRDRKKASNALIIRRRKK.

A disordered region spans residues 221 to 276 (RGSAMNPNDHPHGGGEGRAPIGRKSPMTPWGKKARGVKTRDRKKASNALIIRRRKK). A compositionally biased stretch (basic residues) spans 252–276 (KKARGVKTRDRKKASNALIIRRRKK).

This sequence belongs to the universal ribosomal protein uL2 family. As to quaternary structure, part of the 50S ribosomal subunit. Forms a bridge to the 30S subunit in the 70S ribosome.

In terms of biological role, one of the primary rRNA binding proteins. Required for association of the 30S and 50S subunits to form the 70S ribosome, for tRNA binding and peptide bond formation. It has been suggested to have peptidyltransferase activity; this is somewhat controversial. Makes several contacts with the 16S rRNA in the 70S ribosome. This chain is Large ribosomal subunit protein uL2, found in Aster yellows witches'-broom phytoplasma (strain AYWB).